Consider the following 301-residue polypeptide: Averufin oxidase A (301 aa).

A signal peptide spans 1-23 (MPTYALLGATGATGSAILRCLLA). 3 N-linked (GlcNAc...) asparagine glycosylation sites follow: Asn-62, Asn-86, and Asn-190.

This sequence belongs to the avfA family.

The protein operates within mycotoxin biosynthesis. Its function is as follows. Averufin oxidase A; part of the fragmented gene cluster that mediates the biosynthesis of dothistromin (DOTH), a polyketide toxin very similar in structure to the aflatoxin precursor, versicolorin B. The first step of the pathway is the conversion of acetate to norsolorinic acid (NOR) and requires the fatty acid synthase subunits hexA and hexB, as well as the polyketide synthase pksA. PksA combines a hexanoyl starter unit and 7 malonyl-CoA extender units to synthesize the precursor NOR. The hexanoyl starter unit is provided to the acyl-carrier protein (ACP) domain by the fungal fatty acid synthase hexA/hexB. The second step is the conversion of NOR to averantin (AVN) and requires the norsolorinic acid ketoreductase nor1, which catalyzes the dehydration of norsolorinic acid to form (1'S)-averantin. The cytochrome P450 monooxygenase avnA then catalyzes the hydroxylation of AVN to 5'hydroxyaverantin (HAVN). The next step is performed by adhA that transforms HAVN to averufin (AVF). Averufin might then be converted to hydroxyversicolorone by cypX and avfA. Hydroxyversicolorone is further converted versiconal hemiacetal acetate (VHA) by moxY. VHA is then the substrate for the versiconal hemiacetal acetate esterase est1 to yield versiconal (VAL). Versicolorin B synthase vbsA then converts VAL to versicolorin B (VERB) by closing the bisfuran ring. Then, the activity of the versicolorin B desaturase verB leads to versicolorin A (VERA). DotB, a predicted chloroperoxidase, may perform epoxidation of the A-ring of VERA. Alternatively, a cytochrome P450, such as cypX or avnA could catalyze this step. It is also possible that another, uncharacterized, cytochrome P450 enzyme is responsible for this step. Opening of the epoxide could potentially be achieved by the epoxide hydrolase epoA. However, epoA seems not to be required for DOTH biosynthesis, but other epoxide hydrolases may have the ability to complement this hydrolysis. Alternatively, opening of the epoxide ring could be achieved non-enzymatically. The next step is the deoxygenation of ring A to yield the 5,8-dihydroxyanthraquinone which is most likely catalyzed by the NADPH dehydrogenase encoded by ver1. The last stages of DOTH biosynthesis are proposed to involve hydroxylation of the bisfuran. OrdB and norB might have oxidative roles here. An alternative possibility is that cytochrome P450 monoogenases such as avnA and cypX might perform these steps in addition to previously proposed steps. In Dothistroma septosporum (Red band needle blight fungus), this protein is Averufin oxidase A.